A 168-amino-acid polypeptide reads, in one-letter code: Putative flavin-containing monooxygenase FMO GS-OX-like 11 (168 aa).

An FAD-binding site is contributed by 17-22 (GAGAAG).

Belongs to the FMO family. FAD serves as cofactor.

Functionally, catalyzes the conversion of methylthioalkyl glucosinolates of any chain length into methylsulfinylalkyl glucosinolates. The sequence is that of Putative flavin-containing monooxygenase FMO GS-OX-like 11 from Arabidopsis thaliana (Mouse-ear cress).